Here is an 89-residue protein sequence, read N- to C-terminus: Protein YihD (89 aa).

It to H.influenzae HI_0845.

The sequence is that of Protein YihD (yihD) from Escherichia coli O157:H7.